The sequence spans 116 residues: Large ribosomal subunit protein bL17 (116 aa).

This sequence belongs to the bacterial ribosomal protein bL17 family. Part of the 50S ribosomal subunit. Contacts protein L32.

The chain is Large ribosomal subunit protein bL17 from Cyanothece sp. (strain PCC 7425 / ATCC 29141).